Here is a 145-residue protein sequence, read N- to C-terminus: Basic phospholipase A2 cL037 (145 aa).

The first 21 residues, 1–21 (MYPAHLLVLLAVCVSLLGASA), serve as a signal peptide directing secretion. Residues 22–27 (ILPLPL) constitute a propeptide that is removed on maturation. Disulfide bonds link Cys38/Cys98, Cys54/Cys144, Cys56/Cys72, Cys71/Cys125, Cys78/Cys118, Cys87/Cys111, and Cys105/Cys116. Positions 55, 57, and 59 each coordinate Ca(2+). The active site involves His75. Asp76 provides a ligand contact to Ca(2+). Asp119 is an active-site residue.

This sequence belongs to the phospholipase A2 family. Group I subfamily. D49 sub-subfamily. The cofactor is Ca(2+). Expressed by the venom gland.

Its subcellular location is the secreted. The enzyme catalyses a 1,2-diacyl-sn-glycero-3-phosphocholine + H2O = a 1-acyl-sn-glycero-3-phosphocholine + a fatty acid + H(+). In terms of biological role, PLA2 catalyzes the calcium-dependent hydrolysis of the 2-acyl groups in 3-sn-phosphoglycerides. This Laticauda semifasciata (Black-banded sea krait) protein is Basic phospholipase A2 cL037.